A 432-amino-acid chain; its full sequence is Succinate--CoA ligase [GDP-forming] subunit beta, mitochondrial (432 aa).

The transit peptide at 1-37 directs the protein to the mitochondrion; that stretch reads MASPVAAQAGKLLRALALRPRFLAAGSQAVQLTSRRW. The 229-residue stretch at 46 to 274 folds into the ATP-grasp domain; that stretch reads KKLMSDNGVR…NAEFRQKDIF (229 aa). Gln-57 contacts GTP. The residue at position 73 (Lys-73) is an N6-acetyllysine. Lys-78 carries the post-translational modification N6-succinyllysine. Residue 90-92 participates in GTP binding; it reads GRG. N6-acetyllysine is present on residues Lys-132 and Lys-139. Leu-146 provides a ligand contact to GTP. A Phosphoserine modification is found at Ser-161. An N6-acetyllysine mark is found at Lys-200, Lys-218, and Lys-227. Mg(2+)-binding residues include Asn-243 and Asp-257. N6-acetyllysine is present on residues Lys-271 and Lys-291. Asn-308 provides a ligand contact to substrate. An N6-succinyllysine modification is found at Lys-338. N6-acetyllysine is present on Lys-347. Residue 365-367 coordinates substrate; the sequence is GIV. An N6-acetyllysine mark is found at Lys-386 and Lys-423.

This sequence belongs to the succinate/malate CoA ligase beta subunit family. GTP-specific subunit beta subfamily. Heterodimer of an alpha and a beta subunit. The beta subunit determines specificity for GTP. The cofactor is Mg(2+). As to expression, mainly expressed in liver, kidney, heart, spleen and skeletal muscle. Also found in intestine and colon, and in low amounts in lung, brain, prostate, testis and ovary.

Its subcellular location is the mitochondrion. It catalyses the reaction GTP + succinate + CoA = succinyl-CoA + GDP + phosphate. It functions in the pathway carbohydrate metabolism; tricarboxylic acid cycle; succinate from succinyl-CoA (ligase route): step 1/1. Functionally, GTP-specific succinyl-CoA synthetase functions in the citric acid cycle (TCA), coupling the hydrolysis of succinyl-CoA to the synthesis of GTP and thus represents the only step of substrate-level phosphorylation in the TCA. The beta subunit provides nucleotide specificity of the enzyme and binds the substrate succinate, while the binding sites for coenzyme A and phosphate are found in the alpha subunit. The chain is Succinate--CoA ligase [GDP-forming] subunit beta, mitochondrial from Homo sapiens (Human).